The primary structure comprises 475 residues: Ribulose bisphosphate carboxylase large chain (475 aa).

The propeptide occupies methionine 1–serine 2. N-acetylproline is present on proline 3. An N6,N6,N6-trimethyllysine modification is found at lysine 14. Substrate contacts are provided by asparagine 123 and threonine 173. The Proton acceptor role is filled by lysine 175. A substrate-binding site is contributed by lysine 177. Positions 201, 203, and 204 each coordinate Mg(2+). An N6-carboxylysine modification is found at lysine 201. Histidine 294 serves as the catalytic Proton acceptor. Arginine 295, histidine 327, and serine 379 together coordinate substrate.

Belongs to the RuBisCO large chain family. Type I subfamily. As to quaternary structure, heterohexadecamer of 8 large chains and 8 small chains; disulfide-linked. The disulfide link is formed within the large subunit homodimers. Mg(2+) is required as a cofactor. The disulfide bond which can form in the large chain dimeric partners within the hexadecamer appears to be associated with oxidative stress and protein turnover.

Its subcellular location is the plastid. It is found in the chloroplast. It catalyses the reaction 2 (2R)-3-phosphoglycerate + 2 H(+) = D-ribulose 1,5-bisphosphate + CO2 + H2O. The catalysed reaction is D-ribulose 1,5-bisphosphate + O2 = 2-phosphoglycolate + (2R)-3-phosphoglycerate + 2 H(+). In terms of biological role, ruBisCO catalyzes two reactions: the carboxylation of D-ribulose 1,5-bisphosphate, the primary event in carbon dioxide fixation, as well as the oxidative fragmentation of the pentose substrate in the photorespiration process. Both reactions occur simultaneously and in competition at the same active site. The sequence is that of Ribulose bisphosphate carboxylase large chain from Afrocarpus gracilior (African fern pine).